Reading from the N-terminus, the 210-residue chain is Tissue inhibitor of metalloproteinase (210 aa).

Positions 1–27 (MDLRKHLGLLTLLLVAVFAFYGRPADA) are cleaved as a signal peptide. Cys28 provides a ligand contact to Zn(2+). Involved in metalloproteinase-binding stretches follow at residues 28–31 (CSCM) and 93–94 (DA). Cystine bridges form between Cys28/Cys96, Cys30/Cys118, Cys145/Cys195, Cys150/Cys155, and Cys165/Cys180. The 118-residue stretch at 28–145 (CSCMPSHPQT…SGGYAKATNC (118 aa)) folds into the NTR domain.

It belongs to the protease inhibitor I35 (TIMP) family. In terms of tissue distribution, expressed in heads of female and male adult flies. Expressed at the time of eclosion in unopened wings of adult flies. Strongly expressed at the tip of ovarian germarium region 1 where germline stem cells (GSCs) and cystoblasts reside and in region 2 of the germarium.

Its subcellular location is the secreted. Its function is as follows. Metalloproteinase inhibitor that acts on both matrix metalloproteinases Mmp1 and Mmp2 in vitro. Complexes with metalloproteinases and irreversibly inactivates them by binding to their catalytic zinc cofactor. Required for wing maturation which is the final step in morphogenesis of the adult fly. Involved in the negative regulation of developmental tissue invasion for imaginal disk eversion during metamorphosis by inhibiting Mmp-mediated basement membrane (BM) degradation. Required for oogenesis and for the long-term maintainance of germarial structure and shape in the adult ovaries. Required for maintaining composition and biophysical properties of the extracellular matrix (ECM), and for the normal organization and cyst production of the germline stem cell (GSC) niche. This chain is Tissue inhibitor of metalloproteinase, found in Drosophila melanogaster (Fruit fly).